The primary structure comprises 553 residues: Glycerol kinase 3 (553 aa).

Thr-20 is a substrate binding site. Arg-24 lines the ATP pocket. Positions 94, 148, and 259 each coordinate substrate. Residues Thr-281, Gly-326, and 427-431 (GMTSN) each bind ATP.

Belongs to the FGGY kinase family.

Its subcellular location is the mitochondrion outer membrane. It is found in the cytoplasm. The catalysed reaction is glycerol + ATP = sn-glycerol 3-phosphate + ADP + H(+). The protein operates within polyol metabolism; glycerol degradation via glycerol kinase pathway; sn-glycerol 3-phosphate from glycerol: step 1/1. Functionally, may be involved in the regulation of glycerol uptake and metabolism. The protein is Glycerol kinase 3 of Homo sapiens (Human).